Consider the following 580-residue polypeptide: Serine/threonine-protein kinase PINK1, mitochondrial (580 aa).

Residues 1–77 (MAVRQALGRG…RFFRQSVAGL (77 aa)) constitute a mitochondrion transit peptide. The Mitochondrial intermembrane segment spans residues 78–93 (AARIQRQFMVRARGGA). A helical transmembrane segment spans residues 94–110 (GPCGRAVFLAFGLGLGL). The tract at residues 111 to 117 (IEEKQAE) is required for outer membrane localization. The Cytoplasmic segment spans residues 111–580 (IEEKQAEGRR…LLLSSWRAAP (470 aa)). The 355-residue stretch at 156–510 (YLIGQAIGKG…LAANVLHLSL (355 aa)) folds into the Protein kinase domain. Residues 162–170 (IGKGCNAAV) and Lys-186 contribute to the ATP site. At Ser-227 the chain carries Phosphoserine; by autocatalysis. Asp-361 serves as the catalytic Proton acceptor. Phosphoserine; by autocatalysis is present on Ser-401.

This sequence belongs to the protein kinase superfamily. Ser/Thr protein kinase family. Upon mitochondrial depolarization, it forms a supercomplex with TOM and TIM23 complexes. PINK1-TOM-TIM23 supercomplex formation requires PINK1 interaction with TOMM20 and TOMM70 and is critical for PINK1 stabilization at the outer mitochondrial membrane, kinase activation and downstream mitophagy. Upon mitochondrial depolarization, interacts with TIMM23; the interaction is required for PINK1 accumulation at the outer mitochondrial membrane, kinase activation by autophosphorylation and PRKN recruitement to mitochondria. Interacts with PRKN. Interacts with FBXO7. Forms a complex with PRKN and PARK7. Interacts with NENF. Mg(2+) serves as cofactor. Post-translationally, proteolytically cleaved. In healthy cells, the precursor is continuously imported into the inner mitochondrial membrane (IMM), where it is proteolytically cleaved by mitochondrial-processing peptidase (MPP) and then undergoes further proteolytic cleavage by PARL or AFG3L2 to give rise to the 52 kDa short form. The 52 kDa short form is then released into the cytosol where it rapidly undergoes proteasome-dependent degradation. In unhealthy cells, when cellular stress conditions lead to the loss of mitochondrial membrane potential, mitochondrial import is impaired leading to the precursor accumulating on the outer mitochondrial membrane (OMM). If accumulation at the OMM fails and it is imported into the depolarized mitochondria, it undergoes cleavage by the IMM protease OMA1, promoting its subsequent degradation by the proteasome. In terms of processing, autophosphorylated. Loss of mitochondrial membrane potential results in the precursor accumulating on the outer mitochondrial membrane (OMM) where it is activated by autophosphorylation. Autophosphorylation at Ser-227 and Ser-401 is essential for selective recruitment of PRKN to depolarized mitochondria, via PINK1-dependent phosphorylation of ubiquitin and PRKN. High levels expressed in testis, lower levels in brain, heart, lung, liver and kidney.

Its subcellular location is the mitochondrion outer membrane. It localises to the mitochondrion inner membrane. It is found in the cytoplasm. The protein localises to the cytosol. The enzyme catalyses L-seryl-[protein] + ATP = O-phospho-L-seryl-[protein] + ADP + H(+). It carries out the reaction L-threonyl-[protein] + ATP = O-phospho-L-threonyl-[protein] + ADP + H(+). Functionally, serine/threonine-protein kinase which acts as a sensor of mitochondrial damage and protects against mitochondrial dysfunction during cellular stress. It phosphorylates mitochondrial proteins to coordinate mitochondrial quality control mechanisms that remove and replace dysfunctional mitochondrial components. Depending on the severity of mitochondrial damage, activity ranges from preventing apoptosis and stimulating mitochondrial biogenesis to eliminating severely damaged mitochondria via PINK1-PRKN-dependent mitophagy. When cellular stress results in irreversible mitochondrial damage, PINK1 accumulates at the outer mitochondrial membrane (OMM) where it phosphorylates pre-existing polyubiquitin chains at 'Ser-65', recruits PRKN from the cytosol to the OMM and activates PRKN by phosphorylation at 'Ser-65'. Activated PRKN then ubiquinates VDAC1 and other OMM proteins to initiate mitophagy. The PINK1-PRKN pathway also promotes fission of damaged mitochondria by phosphorylating and thus promoting the PRKN-dependent degradation of mitochondrial proteins involved in fission such as MFN2. This prevents the refusion of unhealthy mitochondria with the mitochondrial network or initiates mitochondrial fragmentation facilitating their later engulfment by autophagosomes. Also promotes mitochondrial fission independently of PRKN and ATG7-mediated mitophagy, via the phosphorylation and activation of DNM1L. Regulates motility of damaged mitochondria by promoting the ubiquitination and subsequent degradation of MIRO1 and MIRO2; in motor neurons, this likely inhibits mitochondrial intracellular anterograde transport along the axons which probably increases the chance of the mitochondria undergoing mitophagy in the soma. Required for ubiquinone reduction by mitochondrial complex I by mediating phosphorylation of complex I subunit NDUFA10. Phosphorylates LETM1, positively regulating its mitochondrial calcium transport activity. The sequence is that of Serine/threonine-protein kinase PINK1, mitochondrial (Pink1) from Mus musculus (Mouse).